The following is a 123-amino-acid chain: MAKIKARDLRGKKKEELLKQLDDLKVELSQLRVAKVTGGAASKLSKIRVVRKSIARVLTVINQTQKENLRKFYKGKKYKPLDLRPKKTRAMRRRLTKHEEKLKTKKQQRKERLYPLRKYAVKA.

Lysine 19 is subject to N6-acetyllysine. Residue lysine 25 forms a Glycyl lysine isopeptide (Lys-Gly) (interchain with G-Cter in SUMO2) linkage. Serine 29 bears the Phosphoserine mark. An N6-acetyllysine modification is found at lysine 43. The interval 100 to 123 is disordered; sequence EKLKTKKQQRKERLYPLRKYAVKA.

It belongs to the universal ribosomal protein uL29 family. In terms of assembly, component of the large ribosomal subunit.

It localises to the cytoplasm. In terms of biological role, component of the large ribosomal subunit. The ribosome is a large ribonucleoprotein complex responsible for the synthesis of proteins in the cell. This Mus musculus (Mouse) protein is Large ribosomal subunit protein uL29 (Rpl35).